The sequence spans 290 residues: NAD kinase (290 aa).

D73 functions as the Proton acceptor in the catalytic mechanism. Residues 73 to 74 (DG), 147 to 148 (ND), R158, R175, D177, 188 to 193 (TAYALS), and Q246 each bind NAD(+).

This sequence belongs to the NAD kinase family. It depends on a divalent metal cation as a cofactor.

It is found in the cytoplasm. It catalyses the reaction NAD(+) + ATP = ADP + NADP(+) + H(+). Its function is as follows. Involved in the regulation of the intracellular balance of NAD and NADP, and is a key enzyme in the biosynthesis of NADP. Catalyzes specifically the phosphorylation on 2'-hydroxyl of the adenosine moiety of NAD to yield NADP. The sequence is that of NAD kinase from Thiobacillus denitrificans (strain ATCC 25259 / T1).